A 905-amino-acid polypeptide reads, in one-letter code: MAASLSERLFSLELLVDWVRLEARLLPSPAAAVEQEEEEEEKEQGEASSPRGLCPAVAFRLLDFPTLLVYPPDGPGAPAAEPWPGVIRFGRGKSCLFRLQPATLHCRLLRTPLATLLLQLPPGRPTPTPQLLGACDISLATAAHRVVGPAASGCSHRHRGRFPLHNRVGERTGDIALAYRLTDLGSRLLSQLERPLTFTRTGGGAEVSPQTQQERQQLQQPASQPSPKEADKPLGELEIPEAQKDLKEMVKSKAECDNVGSVENGKTNSVVTCSGAGNGRNVSSLNEEVTELDMETNIFCPPPLYYTNLTQEKPPPAQAKITIEPQMNAPEEMDDASPEKKRVNPPAHRSCLKHPSSAAHEHPPMLVNPPHIQNIGATNQTCQTEQNRINTIRQLPLLNALLVELSLLYDQPVTSPAHIHPHLAWLYRTEDKKSPESSAKSTCRSEAKKDKRSVGGCEKSVSLQYKKNQIENYKEDKYSEKSSGALHKRVPKGRLLYGLTNTLRLRLKLTNPDMLVVHEKRELYRKRQSQMLGTKFRIPSSKVKLLSSAEQSQKPQLPEDKYLDSDASFTENSDTSRQISGVFDEPSTSKETKLKYATEKKTVDCSKNRINNVSLEEVVSPANSIIPERLTPTNILGGNVEMKIQSPCVFQQDAVVDRIVDKEIDIRQVKTTDNDILMADISDKRTGKNSCYENISELKYSDDLSSPCYSEDFCTSEDTSRSFKAHDSSSRTENPKHSQYTSKSSDTGVSKKKNSSDRSSILSPPFSAGSPVHSYRKFHISKTQDKSLEEASSISASDLSSTHWTEQKENQIDQNSMHNSEITKRAQDISVKTRSSWKSLEKSQSPQTSQVSSYLPSNVSELNVLDSSTSDHFEEGNDDVGSLNISKQCKDICELVINKLPGYTM.

7 disordered regions span residues 30–51 (AAAV…SSPR), 199–235 (TRTG…KPLG), 329–362 (APEE…AHEH), 434–458 (SPES…GGCE), 547–586 (SSAE…FDEP), 721–772 (RSFK…GSPV), and 786–855 (KSLE…SSYL). The span at 34 to 43 (EQEEEEEEKE) shows a compositional bias: acidic residues. The span at 208 to 227 (SPQTQQERQQLQQPASQPSP) shows a compositional bias: low complexity. The segment covering 443–453 (CRSEAKKDKRS) has biased composition (basic and acidic residues). Positions 567-579 (ASFTENSDTSRQI) are enriched in polar residues. Over residues 721-736 (RSFKAHDSSSRTENPK) the composition is skewed to basic and acidic residues. The segment covering 737–748 (HSQYTSKSSDTG) has biased composition (polar residues). Positions 790–801 (EASSISASDLSS) are enriched in low complexity. Over residues 830–855 (SVKTRSSWKSLEKSQSPQTSQVSSYL) the composition is skewed to polar residues.

As to quaternary structure, interacts (via middle region) with microtubules. As to expression, expressed in different cell lines (at protein level).

The protein resides in the cytoplasm. It is found in the cytoskeleton. The protein localises to the spindle pole. It localises to the microtubule organizing center. Its subcellular location is the centrosome. The protein resides in the midbody. Microtubule-associated protein (MAP) that plays a role in the regulation of cell division; promotes microtubule stability and participates in the organization of the spindle midzone and normal progress of cytokinesis. In Homo sapiens (Human), this protein is Microtubule-associated protein 10 (MAP10).